Consider the following 336-residue polypeptide: Glyceraldehyde-3-phosphate dehydrogenase (336 aa).

NAD(+) contacts are provided by residues 12–13 (RI), aspartate 35, arginine 79, and serine 121. D-glyceraldehyde 3-phosphate-binding positions include 152-154 (SCT) and threonine 183. Cysteine 153 serves as the catalytic Nucleophile. Asparagine 184 lines the NAD(+) pocket. D-glyceraldehyde 3-phosphate contacts are provided by residues arginine 198, 211–212 (TG), and arginine 234. Residue asparagine 317 coordinates NAD(+).

It belongs to the glyceraldehyde-3-phosphate dehydrogenase family. As to quaternary structure, homotetramer.

The protein localises to the cytoplasm. It catalyses the reaction D-glyceraldehyde 3-phosphate + phosphate + NAD(+) = (2R)-3-phospho-glyceroyl phosphate + NADH + H(+). The protein operates within carbohydrate degradation; glycolysis; pyruvate from D-glyceraldehyde 3-phosphate: step 1/5. Its activity is regulated as follows. Resistant to pentalenolactone. Its function is as follows. Catalyzes the oxidative phosphorylation of glyceraldehyde 3-phosphate (G3P) to 1,3-bisphosphoglycerate (BPG) using the cofactor NAD. The first reaction step involves the formation of a hemiacetal intermediate between G3P and a cysteine residue, and this hemiacetal intermediate is then oxidized to a thioester, with concomitant reduction of NAD to NADH. The reduced NADH is then exchanged with the second NAD, and the thioester is attacked by a nucleophilic inorganic phosphate to produce BPG. This is Glyceraldehyde-3-phosphate dehydrogenase (gap) from Streptomyces coelicolor (strain ATCC BAA-471 / A3(2) / M145).